A 73-amino-acid chain; its full sequence is MKFHIIFCLLAALMMTSAFAEVTVEPLRHSNKNPTESECKKACADAYAKGDQSKIPEAHNFRDYYCNCHVIVQ.

An N-terminal signal peptide occupies residues 1-20; sequence MKFHIIFCLLAALMMTSAFA.

In terms of processing, contains 2 disulfide bonds. Expressed by the venom gland.

It is found in the secreted. Voltage-gated sodium channel inhibitor. This Scolopendra dehaani (Thai centipede) protein is Mu-scoloptoxin(15)-Ssd1a.